The following is a 550-amino-acid chain: Chaperonin GroEL 2 (550 aa).

ATP is bound by residues 30 to 33 (TLGP), lysine 51, 87 to 91 (DGTTT), glycine 415, and aspartate 496.

Belongs to the chaperonin (HSP60) family. In terms of assembly, forms a cylinder of 14 subunits composed of two heptameric rings stacked back-to-back. Interacts with the co-chaperonin GroES.

Its subcellular location is the cytoplasm. It catalyses the reaction ATP + H2O + a folded polypeptide = ADP + phosphate + an unfolded polypeptide.. Its function is as follows. Together with its co-chaperonin GroES, plays an essential role in assisting protein folding. The GroEL-GroES system forms a nano-cage that allows encapsulation of the non-native substrate proteins and provides a physical environment optimized to promote and accelerate protein folding. The sequence is that of Chaperonin GroEL 2 from Bradyrhizobium diazoefficiens (strain JCM 10833 / BCRC 13528 / IAM 13628 / NBRC 14792 / USDA 110).